Here is a 136-residue protein sequence, read N- to C-terminus: ATP synthase epsilon chain, chloroplastic (136 aa).

Belongs to the ATPase epsilon chain family. In terms of assembly, F-type ATPases have 2 components, CF(1) - the catalytic core - and CF(0) - the membrane proton channel. CF(1) has five subunits: alpha(3), beta(3), gamma(1), delta(1), epsilon(1). CF(0) has three main subunits: a, b and c.

The protein resides in the plastid. The protein localises to the chloroplast thylakoid membrane. Produces ATP from ADP in the presence of a proton gradient across the membrane. In Tetradesmus obliquus (Green alga), this protein is ATP synthase epsilon chain, chloroplastic.